We begin with the raw amino-acid sequence, 293 residues long: Ribosomal RNA small subunit methyltransferase A (293 aa).

Positions 29, 31, 56, 77, 102, and 127 each coordinate S-adenosyl-L-methionine.

This sequence belongs to the class I-like SAM-binding methyltransferase superfamily. rRNA adenine N(6)-methyltransferase family. RsmA subfamily.

The protein localises to the cytoplasm. It catalyses the reaction adenosine(1518)/adenosine(1519) in 16S rRNA + 4 S-adenosyl-L-methionine = N(6)-dimethyladenosine(1518)/N(6)-dimethyladenosine(1519) in 16S rRNA + 4 S-adenosyl-L-homocysteine + 4 H(+). Specifically dimethylates two adjacent adenosines (A1518 and A1519) in the loop of a conserved hairpin near the 3'-end of 16S rRNA in the 30S particle. May play a critical role in biogenesis of 30S subunits. The chain is Ribosomal RNA small subunit methyltransferase A from Lysinibacillus sphaericus (strain C3-41).